The primary structure comprises 197 residues: Orotate phosphoribosyltransferase (197 aa).

5-phospho-alpha-D-ribose 1-diphosphate-binding positions include Arg-87, Lys-91, His-93, and 112–120 (DDVATTGGS). 2 residues coordinate orotate: Thr-116 and Arg-144.

The protein belongs to the purine/pyrimidine phosphoribosyltransferase family. PyrE subfamily. Homodimer. The cofactor is Mg(2+).

The catalysed reaction is orotidine 5'-phosphate + diphosphate = orotate + 5-phospho-alpha-D-ribose 1-diphosphate. Its pathway is pyrimidine metabolism; UMP biosynthesis via de novo pathway; UMP from orotate: step 1/2. In terms of biological role, catalyzes the transfer of a ribosyl phosphate group from 5-phosphoribose 1-diphosphate to orotate, leading to the formation of orotidine monophosphate (OMP). This Sulfolobus acidocaldarius (strain ATCC 33909 / DSM 639 / JCM 8929 / NBRC 15157 / NCIMB 11770) protein is Orotate phosphoribosyltransferase.